Consider the following 242-residue polypeptide: UPF0309 protein BH3325 (242 aa).

Residues 34 to 217 (VSEAVMNGGR…HLLVQQGFEP (184 aa)) enclose the SIS domain.

This sequence belongs to the UPF0309 family.

The chain is UPF0309 protein BH3325 from Halalkalibacterium halodurans (strain ATCC BAA-125 / DSM 18197 / FERM 7344 / JCM 9153 / C-125) (Bacillus halodurans).